A 299-amino-acid chain; its full sequence is Ribonuclease Z (299 aa).

Zn(2+) contacts are provided by H60, H62, D64, H65, H137, D207, and H265. D64 serves as the catalytic Proton acceptor.

It belongs to the RNase Z family. In terms of assembly, homodimer. Requires Zn(2+) as cofactor.

The enzyme catalyses Endonucleolytic cleavage of RNA, removing extra 3' nucleotides from tRNA precursor, generating 3' termini of tRNAs. A 3'-hydroxy group is left at the tRNA terminus and a 5'-phosphoryl group is left at the trailer molecule.. Functionally, zinc phosphodiesterase, which displays some tRNA 3'-processing endonuclease activity. Probably involved in tRNA maturation, by removing a 3'-trailer from precursor tRNA. This chain is Ribonuclease Z, found in Nitrosopumilus maritimus (strain SCM1).